The following is a 255-amino-acid chain: Myogenic factor 5 (255 aa).

The region spanning 83 to 134 (DRRKAATMRERRRLKKVNQAFDTLKRCTTTNPNQRLPKVEILRNAIRYIESL) is the bHLH domain. The interval 217-249 (SEQPGLPLQDPASLSPVASTDSQPATPGASSSR) is disordered. Residues 232–249 (PVASTDSQPATPGASSSR) are compositionally biased toward polar residues.

Efficient DNA binding requires dimerization with another bHLH protein.

It localises to the nucleus. In terms of biological role, acts as a transcriptional activator that promotes transcription of muscle-specific target genes and plays a role in muscle differentiation. Together with MYOG and MYOD1, co-occupies muscle-specific gene promoter core region during myogenesis. Induces fibroblasts to differentiate into myoblasts. Probable sequence specific DNA-binding protein. In Bos taurus (Bovine), this protein is Myogenic factor 5 (MYF5).